Here is an 880-residue protein sequence, read N- to C-terminus: Alanine--tRNA ligase (880 aa).

Zn(2+) contacts are provided by H558, H562, C663, and H667.

Belongs to the class-II aminoacyl-tRNA synthetase family. Requires Zn(2+) as cofactor.

It localises to the cytoplasm. It carries out the reaction tRNA(Ala) + L-alanine + ATP = L-alanyl-tRNA(Ala) + AMP + diphosphate. In terms of biological role, catalyzes the attachment of alanine to tRNA(Ala) in a two-step reaction: alanine is first activated by ATP to form Ala-AMP and then transferred to the acceptor end of tRNA(Ala). Also edits incorrectly charged Ser-tRNA(Ala) and Gly-tRNA(Ala) via its editing domain. The chain is Alanine--tRNA ligase from Mycoplasmopsis agalactiae (strain NCTC 10123 / CIP 59.7 / PG2) (Mycoplasma agalactiae).